Reading from the N-terminus, the 513-residue chain is GMP synthase [glutamine-hydrolyzing] (513 aa).

A Glutamine amidotransferase type-1 domain is found at 3 to 200 (SVLVLDFGSQ…LITIAGITPD (198 aa)). Cysteine 80 functions as the Nucleophile in the catalytic mechanism. Residues histidine 174 and glutamate 176 contribute to the active site. In terms of domain architecture, GMPS ATP-PPase spans 201 to 388 (WSSKSFIEHQ…LGIAEDILMR (188 aa)). Residue 228–234 (SGGVDST) participates in ATP binding.

As to quaternary structure, homodimer.

It carries out the reaction XMP + L-glutamine + ATP + H2O = GMP + L-glutamate + AMP + diphosphate + 2 H(+). The protein operates within purine metabolism; GMP biosynthesis; GMP from XMP (L-Gln route): step 1/1. Its function is as follows. Catalyzes the synthesis of GMP from XMP. The chain is GMP synthase [glutamine-hydrolyzing] from Pelodictyon phaeoclathratiforme (strain DSM 5477 / BU-1).